We begin with the raw amino-acid sequence, 123 residues long: Protein lgg-1 (123 aa).

Gly-116 is lipidated: Phosphatidylethanolamine amidated glycine. Positions 117–123 are cleaved as a propeptide — removed in mature form; it reads GEVEKKE.

It belongs to the ATG8 family. In terms of assembly, interacts with sepa-1 (via the LIR motifs); the interaction is direct. Interacts with allo-1 (via the LIR motif). Interacts with sqst-1 (via the LIR motifs); the interaction is direct. Both lipidated and unlipidated forms interact with epg-7 (via the LIR motif); the interaction is direct. Interacts with epg-2 (via the LIR motifs); the interaction is direct. Interacts with atg-13; the interaction is direct. Interacts with unc-51 (via the LIR motif); the interaction is direct. Interacts with atg-7; the interaction is direct. Interacts with atg-3. The interaction with atg-7 and atg-3 may be required for the lipidation of lgg-1. In terms of processing, cleaved by atg-4.1 and/or atg-4.2, after Gly-116 to form a thioester bond with 'Cys-523' of atg-7 (E1-like activating enzyme) before being transferred to 'Cys-255' of atg-3 (E2 conjugating enzyme), in order to be amidated with phosphatidylethanolamine. This lipid modification anchors lgg-1 to membranes and can be reversed by atg-4.2, releasing soluble lgg-1. C-terminal cleavage is essential for autophagosome initiation and biogenesis. Lipidation is not essential for autophagy or development but the lipidated form is involved in cargo recognition and autophagosome biogenesis. Lipidation regulates lgg-2-positive autophagosome formation. Expressed in PLML touch receptor neuron and in the ventral nerve cord. Expressed in AIY interneurons.

It localises to the preautophagosomal structure. It is found in the cytoplasmic vesicle. The protein localises to the autophagosome. Its subcellular location is the autophagosome membrane. The protein resides in the lysosome lumen. It localises to the mitochondrion. It is found in the cytoplasm. The protein localises to the phagosome membrane. Its subcellular location is the cell membrane. The protein resides in the cell projection. It localises to the dendrite. It is found in the perikaryon. Ubiquitin-like modifier involved in the formation of autophagosomal vacuoles (autophagosomes). When lipidated mediates tethering between adjacent membranes and stimulates membrane fusion during autophagy. Recruits lipidated-lgg-2 to maturing autophagosomes. Acts in the aggrephagy pathway, which is the macroautophagic degradation of ubiquitinated protein aggregates, and preferentially interacts with autophagy proteins and substrates containing LIR motifs to mediate autophagosome formation and protein aggregate degradation. In particular, binds to components of the unc-51-atg-13 complex to regulate autophagosome formation and cargo sequestration. Required for the degradation of specific sepa-1- and sqst-1-containing protein aggregates during embryogenesis. Involved in allophagy, which is an autophagic process in which paternal mitochondria and organelles are degraded during fertilization, and moreover is required for the formation of lgg-2-positive allophagic autophagosomes in embryos. Involved in the clearance of apoptotic cells by promoting the delivery of engulfed apoptotic cells to the lysosome. Plays a role in the distribution and clearance of germ cell specific P-granules from somatic cells. Also plays a role in the autophagy-mediated degradation of ribosomal RNA and ribosomal proteins in lysosomes. Involved in xenophagy, the autophagy-mediated degradation of pathogens and pathogen products, such as toxins. Required for normal survival when exposed to pathogenic bacteria S.typhimurium probably by promoting autophagic degradation of intracellular S.typhimurium. Also plays a role in membrane-pore repair. Plays a role in mitophagy. Essential for dauer development and longevity, including longevity in response to moderate, short-term heat shock, also known as a hormetic heat shock. This chain is Protein lgg-1, found in Caenorhabditis elegans.